Here is a 179-residue protein sequence, read N- to C-terminus: Inner membrane-spanning protein YciB (179 aa).

The next 5 membrane-spanning stretches (helical) occupy residues 22–42, 50–70, 76–96, 121–141, and 149–169; these read IYAATTALIVATAIVLIYSWV, MALITFVLVAVFGGLTLFFHN, WKVTVIYALFAGALLFSQWVM, LAWAVFFILCGLANIYIAFWL, and FKVFGLTALTLVFTLLSGIYI.

The protein belongs to the YciB family.

Its subcellular location is the cell inner membrane. Functionally, plays a role in cell envelope biogenesis, maintenance of cell envelope integrity and membrane homeostasis. This is Inner membrane-spanning protein YciB from Klebsiella pneumoniae (strain 342).